The following is a 218-amino-acid chain: Redox-sensing transcriptional repressor Rex (218 aa).

Positions 25-64 form a DNA-binding region, H-T-H motif; the sequence is WYLSYVQLLHADGCESVSSTRIARAVGVDASLVAKDLSYV. 99-104 serves as a coordination point for NAD(+); it reads GVGSLG.

The protein belongs to the transcriptional regulatory Rex family. In terms of assembly, homodimer.

It is found in the cytoplasm. Modulates transcription in response to changes in cellular NADH/NAD(+) redox state. In Porphyromonas gingivalis (strain ATCC 33277 / DSM 20709 / CIP 103683 / JCM 12257 / NCTC 11834 / 2561), this protein is Redox-sensing transcriptional repressor Rex.